A 305-amino-acid polypeptide reads, in one-letter code: RNA-binding protein rnp-1 (305 aa).

Positions 3 to 72 constitute an RRM domain; it reads SKLFVGNLPD…KVVNIKKSTS (70 aa). The CCHC-type zinc-finger motif lies at 84–97; it reads CFRCQSDEHRTPQC. The segment at 284-305 is disordered; the sequence is QQIQHQQATGSPAPVPAPPRLY. Positions 296-305 are enriched in pro residues; it reads APVPAPPRLY.

In terms of tissue distribution, expressed throughout the germline.

In terms of biological role, RNA-binding protein that is required for the germ line to transition from spermatogenesis to oogenesis and allow for normal oocyte development. The polypeptide is RNA-binding protein rnp-1 (Caenorhabditis elegans).